The primary structure comprises 299 residues: Neomycin C epimerase (299 aa).

In terms of domain architecture, Radical SAM core spans Pro-10–Arg-222. Positions 26, 30, 33, 226, and 247 each coordinate [4Fe-4S] cluster. Cys-249 acts as the Proton donor in catalysis. Positions 271 and 274 each coordinate [4Fe-4S] cluster.

Belongs to the radical SAM superfamily. [4Fe-4S] cluster serves as cofactor.

The catalysed reaction is neomycin C + AH2 + S-adenosyl-L-methionine = neomycin B + 5'-deoxyadenosine + L-methionine + A + H(+). Its pathway is antibiotic biosynthesis; neomycin biosynthesis. Catalyzes the last step of neomycin B biosynthesis, i.e. the irreversible epimerization at C-5''' of neomycin C to give neomycin B. To a lesser extent, is also able to convert neomycin Y2 to neomycin Y1. The chain is Neomycin C epimerase from Streptomyces fradiae (Streptomyces roseoflavus).